The following is a 471-amino-acid chain: Amidophosphoribosyltransferase (471 aa).

The active-site Nucleophile is Cys2. Residues 2 to 224 (CGIFGIYSYE…PGEIIEIKDG (223 aa)) enclose the Glutamine amidotransferase type-2 domain. Cys255 is a binding site for [4Fe-4S] cluster. 3 residues coordinate Mg(2+): Ser302, Asp364, and Asp365. [4Fe-4S] cluster-binding residues include Cys401, Cys450, and Cys453.

In the C-terminal section; belongs to the purine/pyrimidine phosphoribosyltransferase family. The cofactor is Mg(2+). It depends on [4Fe-4S] cluster as a cofactor.

It catalyses the reaction 5-phospho-beta-D-ribosylamine + L-glutamate + diphosphate = 5-phospho-alpha-D-ribose 1-diphosphate + L-glutamine + H2O. It participates in purine metabolism; IMP biosynthesis via de novo pathway; N(1)-(5-phospho-D-ribosyl)glycinamide from 5-phospho-alpha-D-ribose 1-diphosphate: step 1/2. In terms of biological role, catalyzes the formation of phosphoribosylamine from phosphoribosylpyrophosphate (PRPP) and glutamine. The polypeptide is Amidophosphoribosyltransferase (Methanocaldococcus jannaschii (strain ATCC 43067 / DSM 2661 / JAL-1 / JCM 10045 / NBRC 100440) (Methanococcus jannaschii)).